The following is a 129-amino-acid chain: MSNIPADLKYASTHEWVRDEGDGTFTVGISEHAQELLGDMVFVELPDVGDKVATGDDIAVAESVKAASDIYAPMTGEVVAINEDLEDAPETVNNDPYGDGWLFRIKADDSSELDNLLDANTYEASIDED.

Residues 24–106 enclose the Lipoyl-binding domain; that stretch reads TFTVGISEHA…YGDGWLFRIK (83 aa). Position 65 is an N6-lipoyllysine (lysine 65).

Belongs to the GcvH family. As to quaternary structure, the glycine cleavage system is composed of four proteins: P, T, L and H. (R)-lipoate is required as a cofactor.

In terms of biological role, the glycine cleavage system catalyzes the degradation of glycine. The H protein shuttles the methylamine group of glycine from the P protein to the T protein. This chain is Glycine cleavage system H protein, found in Idiomarina loihiensis (strain ATCC BAA-735 / DSM 15497 / L2-TR).